A 218-amino-acid chain; its full sequence is Thiopurine S-methyltransferase (218 aa).

Residues tryptophan 10, leucine 45, glutamate 66, and arginine 123 each contribute to the S-adenosyl-L-methionine site.

This sequence belongs to the class I-like SAM-binding methyltransferase superfamily. TPMT family.

It is found in the cytoplasm. The catalysed reaction is S-adenosyl-L-methionine + a thiopurine = S-adenosyl-L-homocysteine + a thiopurine S-methylether.. The sequence is that of Thiopurine S-methyltransferase from Shewanella baltica (strain OS223).